Consider the following 277-residue polypeptide: Probable endonuclease 4 (277 aa).

The Zn(2+) site is built by His-69, His-109, Glu-145, Asp-179, His-182, His-214, Asp-227, His-229, and Glu-259.

The protein belongs to the AP endonuclease 2 family. Requires Zn(2+) as cofactor.

It catalyses the reaction Endonucleolytic cleavage to 5'-phosphooligonucleotide end-products.. Endonuclease IV plays a role in DNA repair. It cleaves phosphodiester bonds at apurinic or apyrimidinic (AP) sites, generating a 3'-hydroxyl group and a 5'-terminal sugar phosphate. In Bacteroides thetaiotaomicron (strain ATCC 29148 / DSM 2079 / JCM 5827 / CCUG 10774 / NCTC 10582 / VPI-5482 / E50), this protein is Probable endonuclease 4.